Consider the following 620-residue polypeptide: Protein translocase subunit SecD (620 aa).

The next 6 membrane-spanning stretches (helical) occupy residues 10–30, 464–484, 488–507, 511–533, 555–575, and 582–602; these read YLLILAVLAVGFIYSAPNLYP, LWGMLFVSLFIIVIYRFFGVI, ALAFNMVMLVALMSILGATL, GIAGIVLTMGMAVDANVLIFSRI, FTAILDANLTSLLVGGILYAM, and GFAVTMSLGIITSMFTAIMVT.

Belongs to the SecD/SecF family. SecD subfamily. In terms of assembly, forms a complex with SecF. Part of the essential Sec protein translocation apparatus which comprises SecA, SecYEG and auxiliary proteins SecDF-YajC and YidC.

It localises to the cell inner membrane. In terms of biological role, part of the Sec protein translocase complex. Interacts with the SecYEG preprotein conducting channel. SecDF uses the proton motive force (PMF) to complete protein translocation after the ATP-dependent function of SecA. This chain is Protein translocase subunit SecD, found in Pseudomonas aeruginosa (strain ATCC 15692 / DSM 22644 / CIP 104116 / JCM 14847 / LMG 12228 / 1C / PRS 101 / PAO1).